Reading from the N-terminus, the 490-residue chain is Bifunctional protein HldE (490 aa).

Positions 1–330 (MERKEIESLF…AEIGHAHPDS (330 aa)) are ribokinase. 205-208 (NRKE) contributes to the ATP binding site. The active site involves D275. Residues 356-490 (FTNGCFDLLH…EKIRTGSIKE (135 aa)) are cytidylyltransferase.

It in the N-terminal section; belongs to the carbohydrate kinase PfkB family. This sequence in the C-terminal section; belongs to the cytidylyltransferase family. Homodimer.

The catalysed reaction is D-glycero-beta-D-manno-heptose 7-phosphate + ATP = D-glycero-beta-D-manno-heptose 1,7-bisphosphate + ADP + H(+). The enzyme catalyses D-glycero-beta-D-manno-heptose 1-phosphate + ATP + H(+) = ADP-D-glycero-beta-D-manno-heptose + diphosphate. It participates in nucleotide-sugar biosynthesis; ADP-L-glycero-beta-D-manno-heptose biosynthesis; ADP-L-glycero-beta-D-manno-heptose from D-glycero-beta-D-manno-heptose 7-phosphate: step 1/4. The protein operates within nucleotide-sugar biosynthesis; ADP-L-glycero-beta-D-manno-heptose biosynthesis; ADP-L-glycero-beta-D-manno-heptose from D-glycero-beta-D-manno-heptose 7-phosphate: step 3/4. Functionally, catalyzes the phosphorylation of D-glycero-D-manno-heptose 7-phosphate at the C-1 position to selectively form D-glycero-beta-D-manno-heptose-1,7-bisphosphate. Catalyzes the ADP transfer from ATP to D-glycero-beta-D-manno-heptose 1-phosphate, yielding ADP-D-glycero-beta-D-manno-heptose. The protein is Bifunctional protein HldE of Geotalea uraniireducens (strain Rf4) (Geobacter uraniireducens).